The primary structure comprises 282 residues: TPR repeat protein oca3 (282 aa).

4 TPR repeats span residues Ile16–Thr50, Pro71–His104, Leu139–Glu172, and Arg174–Tyr211.

The protein resides in the cytoplasm. It is found in the nucleus. May be involved in cell cycle regulation. The protein is TPR repeat protein oca3 (oca3) of Schizosaccharomyces pombe (strain 972 / ATCC 24843) (Fission yeast).